The chain runs to 506 residues: ESX-5 secretion system ATPase EccB5 (506 aa).

The chain crosses the membrane as a helical span at residues Val56–Ile76.

This sequence belongs to the EccB family. In terms of assembly, part of the ESX-5 / type VII secretion system (T7SS), which is composed of cytosolic and membrane components. The ESX-5 membrane complex is composed of EccB5, EccC5, EccD5 and EccE5.

It localises to the cell inner membrane. In terms of biological role, an ATPase. Part of the ESX-5 specialized secretion system, which is responsible for the secretion of EsxN and a number of PE_PGRS and PPE proteins, including PPE41. This is ESX-5 secretion system ATPase EccB5 from Mycobacterium tuberculosis (strain CDC 1551 / Oshkosh).